Reading from the N-terminus, the 285-residue chain is Putative ABC transporter ATP-binding protein CPE0195 (285 aa).

The 237-residue stretch at 6–242 (LKVEELNYNY…KEVIRKVNLR (237 aa)) folds into the ABC transporter domain. ATP is bound at residue 39-46 (GGNGVGKS).

It belongs to the ABC transporter superfamily.

The protein resides in the cell membrane. Functionally, probably part of an ABC transporter complex. Responsible for energy coupling to the transport system. The chain is Putative ABC transporter ATP-binding protein CPE0195 from Clostridium perfringens (strain 13 / Type A).